The sequence spans 353 residues: Ribosomal RNA large subunit methyltransferase M (353 aa).

Residues serine 183, 216–219 (APGG), aspartate 235, aspartate 255, and aspartate 271 contribute to the S-adenosyl-L-methionine site. The Proton acceptor role is filled by lysine 300.

Belongs to the class I-like SAM-binding methyltransferase superfamily. RNA methyltransferase RlmE family. RlmM subfamily. Monomer.

It is found in the cytoplasm. It catalyses the reaction cytidine(2498) in 23S rRNA + S-adenosyl-L-methionine = 2'-O-methylcytidine(2498) in 23S rRNA + S-adenosyl-L-homocysteine + H(+). Catalyzes the 2'-O-methylation at nucleotide C2498 in 23S rRNA. In Azotobacter vinelandii (strain DJ / ATCC BAA-1303), this protein is Ribosomal RNA large subunit methyltransferase M.